Here is a 307-residue protein sequence, read N- to C-terminus: Acetyl-coenzyme A carboxylase carboxyl transferase subunit beta (307 aa).

The CoA carboxyltransferase N-terminal domain maps to 28-297 (LWVKCPDTGQ…TPEPGTAPEP (270 aa)). A disordered region spans residues 286–307 (RRTPEPGTAPEPTTPEPLPNAA). Positions 292–307 (GTAPEPTTPEPLPNAA) are enriched in pro residues.

This sequence belongs to the AccD/PCCB family. In terms of assembly, acetyl-CoA carboxylase is a heterohexamer composed of biotin carboxyl carrier protein (AccB), biotin carboxylase (AccC) and two subunits each of ACCase subunit alpha (AccA) and ACCase subunit beta (AccD).

Its subcellular location is the cytoplasm. The catalysed reaction is N(6)-carboxybiotinyl-L-lysyl-[protein] + acetyl-CoA = N(6)-biotinyl-L-lysyl-[protein] + malonyl-CoA. Its pathway is lipid metabolism; malonyl-CoA biosynthesis; malonyl-CoA from acetyl-CoA: step 1/1. Functionally, component of the acetyl coenzyme A carboxylase (ACC) complex. Biotin carboxylase (BC) catalyzes the carboxylation of biotin on its carrier protein (BCCP) and then the CO(2) group is transferred by the transcarboxylase to acetyl-CoA to form malonyl-CoA. This chain is Acetyl-coenzyme A carboxylase carboxyl transferase subunit beta, found in Methylorubrum extorquens (strain ATCC 14718 / DSM 1338 / JCM 2805 / NCIMB 9133 / AM1) (Methylobacterium extorquens).